Here is a 482-residue protein sequence, read N- to C-terminus: Anaerobic nitric oxide reductase flavorubredoxin (482 aa).

Residues 30–210 (LRGSSYNSYL…PFSRLVTPKI (181 aa)) are zinc metallo-hydrolase. Positions 79, 81, 83, 147, 166, and 227 each coordinate Fe cation. The Flavodoxin-like domain occupies 254 to 393 (ITLFYDTMSN…ICRQHGREIA (140 aa)). Residues 260-264 (TMSNN) and 342-369 (AFGS…EMSM) each bind FMN. The Rubredoxin-like domain maps to 426–477 (GPCMQCSVCQWVYDPALGEPLQDVAPGTPWSDVPDNFLCPECSLGKDVFDVL). Residues cysteine 431, cysteine 434, cysteine 464, and cysteine 467 each coordinate Fe cation.

It in the N-terminal section; belongs to the zinc metallo-hydrolase group 3 family. In terms of assembly, homotetramer. The cofactor is Fe cation. FMN serves as cofactor.

It localises to the cytoplasm. The protein operates within nitrogen metabolism; nitric oxide reduction. Anaerobic nitric oxide reductase; uses NADH to detoxify nitric oxide (NO), protecting several 4Fe-4S NO-sensitive enzymes. Has at least 2 reductase partners, only one of which (NorW, flavorubredoxin reductase) has been identified. NO probably binds to the di-iron center; electrons enter from the NorW at rubredoxin and are transferred sequentially to the FMN center and the di-iron center. Also able to function as an aerobic oxygen reductase. The chain is Anaerobic nitric oxide reductase flavorubredoxin from Enterobacter sp. (strain 638).